We begin with the raw amino-acid sequence, 1479 residues long: Type VII secretion system protein EssC (1479 aa).

Residues 1 to 189 form a required for substrate secretion, protein missing this segment is unstable region; the sequence is MHKLIIKYNK…ASSLIRLTQE (189 aa). The Cytoplasmic segment spans residues 1-229; it reads MHKLIIKYNK…RPPQPIQKNN (229 aa). The chain crosses the membrane as a helical span at residues 230–252; the sequence is TVIWRSIIPPLVMIALTVVIFLV. The Extracellular segment spans residues 253-256; the sequence is RPIG. A helical membrane pass occupies residues 257–279; it reads IYILMMIGMSTVTIVFGITTYFS. Residues 280 to 1479 are Cytoplasmic-facing; that stretch reads EKKKYNKDVE…QAYQKIRWFK (1200 aa). 2 FtsK domains span residues 652-846 and 997-1183; these read DDIL…QDSN and QGPM…SEVS. ATP-binding positions include 672–679 and 1014–1021; these read GTTGSGKS and GSPGYGRT. Residues 1249–1479 form a required for substrate secretion, truncated protein is stable region; it reads MMPDEIKYED…QAYQKIRWFK (231 aa).

Belongs to the EssC family. In terms of assembly, homooligomer. Interacts with EsaE.

It is found in the cell membrane. Component of the type VII secretion system (Ess). Required for the secretion of substrates including EsxA and EsxB. However, unable to support secretion of the substrate protein EsxC. This chain is Type VII secretion system protein EssC, found in Staphylococcus aureus (strain NCTC 8325 / PS 47).